A 509-amino-acid chain; its full sequence is Coiled-coil domain-containing protein 181 (509 aa).

The segment covering 46 to 82 has biased composition (basic and acidic residues); the sequence is ENINQDLKENETVMEHTKRHSDPDKSLQDEVSPRRND. Disordered regions lie at residues 46-120 and 241-367; these read ENIN…EEED and PINN…EEKE. 2 stretches are compositionally biased toward polar residues: residues 243-266 and 300-334; these read NNAN…SVSG and TCPS…STYC. Residues 335 to 375 are a coiled coil; sequence LSPRQKELQKQLEEKREKLKREEERRKIEEEKEKKRENDIV. A compositionally biased stretch (basic and acidic residues) spans 338-367; it reads RQKELQKQLEEKREKLKREEERRKIEEEKE.

It belongs to the CCDC181 family. In terms of assembly, homodimer. Interacts with HOOK1. Interacts with HOOK2. Interacts with HOOK3.

Its subcellular location is the cytoplasm. It is found in the cytoskeleton. The protein resides in the cell projection. The protein localises to the cilium. It localises to the flagellum. Its function is as follows. Microtubule-binding protein that localizes to the microtubular manchette of elongating spermatids. This chain is Coiled-coil domain-containing protein 181, found in Homo sapiens (Human).